The sequence spans 432 residues: Histidinol dehydrogenase (432 aa).

Residues Y130, Q191, and N214 each coordinate NAD(+). Substrate contacts are provided by S237, Q259, and H262. Zn(2+) is bound by residues Q259 and H262. Active-site proton acceptor residues include E327 and H328. Residues H328, D361, E415, and H420 each coordinate substrate. D361 lines the Zn(2+) pocket. H420 provides a ligand contact to Zn(2+).

It belongs to the histidinol dehydrogenase family. Requires Zn(2+) as cofactor.

It catalyses the reaction L-histidinol + 2 NAD(+) + H2O = L-histidine + 2 NADH + 3 H(+). The protein operates within amino-acid biosynthesis; L-histidine biosynthesis; L-histidine from 5-phospho-alpha-D-ribose 1-diphosphate: step 9/9. Its function is as follows. Catalyzes the sequential NAD-dependent oxidations of L-histidinol to L-histidinaldehyde and then to L-histidine. The polypeptide is Histidinol dehydrogenase (Agrobacterium fabrum (strain C58 / ATCC 33970) (Agrobacterium tumefaciens (strain C58))).